Consider the following 709-residue polypeptide: Polyribonucleotide nucleotidyltransferase (709 aa).

Residues Asp-486 and Asp-492 each coordinate Mg(2+). In terms of domain architecture, KH spans 553-612 (PRIHTIKINPDKIKDVIGKGGSVIRALTEETGTTIEIEDDGTVKIAATDGEKAKHAISRI). Residues 622–690 (ARIYTGKVTR…RQGRVRLSIK (69 aa)) enclose the S1 motif domain.

Belongs to the polyribonucleotide nucleotidyltransferase family. Component of the RNA degradosome, which is a multiprotein complex involved in RNA processing and mRNA degradation. Mg(2+) serves as cofactor.

It localises to the cytoplasm. The catalysed reaction is RNA(n+1) + phosphate = RNA(n) + a ribonucleoside 5'-diphosphate. In terms of biological role, involved in mRNA degradation. Catalyzes the phosphorolysis of single-stranded polyribonucleotides processively in the 3'- to 5'-direction. The polypeptide is Polyribonucleotide nucleotidyltransferase (Photorhabdus laumondii subsp. laumondii (strain DSM 15139 / CIP 105565 / TT01) (Photorhabdus luminescens subsp. laumondii)).